We begin with the raw amino-acid sequence, 249 residues long: E3 ubiquitin-protein ligase RMA1 (249 aa).

Residues 48–97 form an RING-type zinc finger; the sequence is CNICLDSVQEPVVTLCGHLFCWPCIHKWLDVQSFSTSDEYQRHRQCPVCK. A helical; Anchor for type IV membrane protein transmembrane segment spans residues 231–248; the sequence is LGRIFFFFMCCVVLCLLL.

In terms of tissue distribution, ubiquitous. Highly expressed in roots.

It is found in the endoplasmic reticulum membrane. It carries out the reaction S-ubiquitinyl-[E2 ubiquitin-conjugating enzyme]-L-cysteine + [acceptor protein]-L-lysine = [E2 ubiquitin-conjugating enzyme]-L-cysteine + N(6)-ubiquitinyl-[acceptor protein]-L-lysine.. The protein operates within protein modification; protein ubiquitination. Its function is as follows. E3 ubiquitin-protein ligase that promotes the ubiquitination and proteasomal degradation of aquaporin PIP2-1. Forms a ubiquitin ligase complex in cooperation with the E2 enzymes UCB8/UCB10. The chain is E3 ubiquitin-protein ligase RMA1 (RMA1) from Arabidopsis thaliana (Mouse-ear cress).